The following is a 161-amino-acid chain: Glycine cleavage system H protein 3 (161 aa).

The Lipoyl-binding domain occupies 40 to 122; that stretch reads TVTLGLTDVG…YGDAWIVKIK (83 aa). An N6-lipoyllysine modification is found at Lys81.

Belongs to the GcvH family. The glycine cleavage system is composed of four proteins: P, T, L and H. Requires (R)-lipoate as cofactor.

Its function is as follows. The glycine cleavage system catalyzes the degradation of glycine. The H protein shuttles the methylamine group of glycine from the P protein to the T protein. The polypeptide is Glycine cleavage system H protein 3 (Aquifex aeolicus (strain VF5)).